We begin with the raw amino-acid sequence, 1132 residues long: MGKGSSKGHTPREAKDNLKSTQLLSVIDAISEGPIEGPVDGLKSVLLNSTPVLDTEGNTNISGVTVVFRAGEQEQTPPEGFESSGSETVLGTEVKYDTPITRTITSANIDRLRFTFGVQALVETTSKGDRNPSEVRLLVQIQRNGGWVTEKDITIKGKTTSQYLASVVMGNLPPRPFNIRMRRMTPDSTTDQLQNKTLWSSYTEIIDVKQCYPNTALVGVQVDSEQFGSQQVSRNYHLRGRILQVPSNYNPQTRQYSGIWDGTFKPAYSNNMAWCLWDMLTHPRYGMGKRLGAADVDKWALYVIGQYCDQSVPDGFGGTEPRITCNAYLTTQRKAWDVLSDFCSAMRCMPVWNGQTLTFVQDRPSDKTWTYNRSNVVMPDDGAPFRYSFSALKDRHNAVEVNWIDPNNGWETATELVEDTQAIARYGRNVTKMDAFGCTSRGQAHRAGLWLIKTELLETQTVDFSVGAEGLRHVPGDVIEICDDDYAGISTGGRVLAVNSQTRTLTLDREITLPSSGTALISLVDGSGNPVSVEVQSVTDGVKVKVSRVPDGVAEYSVWELKLPTLRQRLFRCVSIRENDDGTYAITAVQHVPEKEAIVDNGAHFDGEQSGTVNGVTPPAVQHLTAEVTADSGEYQVLARWDTPKVVKGVSFLLRLTVTADDGSERLVSTARTTETTYRFTQLALGNYRLTVRAVNAWGQQGDPASVSFRIAAPAAPSRIELTPGYFQITATPHLAVYDPTVQFEFWFSEKQIADIRQVETSTRYLGTALYWIAASINIKPGHDYYFYIRSVNTVGKSAFVEAVGRASDDAEGYLDFFKGKITESHLGKELLEKVELTEDNASRLEEFSKEWKDASDKWNAMWAVKIEQTKDGKHYVAGIGLSMEDTEEGKLSQFLVAANRIAFIDPANGNETPMFVAQGNQIFMNDVFLKRLTAPTITSGGNPPAFSLTPDGKLTAKNADISGSVNANSGTLSNVTIAENCTINGTLRAEKIVGDIVKAASAAFPRQRESSVDWPSGTRTVTVTDDHPFDRQIVVLPLTFRGSKRTVSGRTTYSMCYLKVLMNGAVIYDGAANEAVQVFSRIVDMPAGRGNVILTFTLTSTRHSADIPPYTFASDVQVMVIKKQALGISVV.

2 consecutive Fibronectin type-III domains span residues 618 to 711 and 712 to 807; these read PPAV…SFRI and AAPA…VGRA. An interaction with host LamB region spans residues 883-1132; it reads SMEDTEEGKL…KKQALGISVV (250 aa).

The protein belongs to the Caudoviricetes tip attachment protein J family. In terms of assembly, interacts with host LamB.

It is found in the virion. It localises to the host cytoplasm. Attaches the virion to the host receptor LamB, inducing viral DNA ejection. During tail assembly, initiates distal tail tip assembly by interacting with gpI, gpL and gpK. During virus entry to host cell, binds strongly to host LamB in an irreversible attachment. The binding induces structural changes in the tail leading to viral DNA injection through LamB trimeric pore. This is Tip attachment protein J (J) from Escherichia coli (Bacteriophage lambda).